A 391-amino-acid chain; its full sequence is Succinate--CoA ligase [ADP-forming] subunit beta (391 aa).

The ATP-grasp domain maps to 9–245 (KQIFAKYGVP…ISEEDADERE (237 aa)). ATP-binding positions include lysine 46, 53-55 (GRG), glutamate 99, alanine 102, and glutamate 107. 2 residues coordinate Mg(2+): asparagine 200 and aspartate 214. Substrate contacts are provided by residues asparagine 265 and 322–324 (GIV).

This sequence belongs to the succinate/malate CoA ligase beta subunit family. In terms of assembly, heterotetramer of two alpha and two beta subunits. The cofactor is Mg(2+).

It carries out the reaction succinate + ATP + CoA = succinyl-CoA + ADP + phosphate. It catalyses the reaction GTP + succinate + CoA = succinyl-CoA + GDP + phosphate. The protein operates within carbohydrate metabolism; tricarboxylic acid cycle; succinate from succinyl-CoA (ligase route): step 1/1. Its function is as follows. Succinyl-CoA synthetase functions in the citric acid cycle (TCA), coupling the hydrolysis of succinyl-CoA to the synthesis of either ATP or GTP and thus represents the only step of substrate-level phosphorylation in the TCA. The beta subunit provides nucleotide specificity of the enzyme and binds the substrate succinate, while the binding sites for coenzyme A and phosphate are found in the alpha subunit. This chain is Succinate--CoA ligase [ADP-forming] subunit beta, found in Sulfurimonas denitrificans (strain ATCC 33889 / DSM 1251) (Thiomicrospira denitrificans (strain ATCC 33889 / DSM 1251)).